Here is a 308-residue protein sequence, read N- to C-terminus: tRNA pseudouridine synthase B (308 aa).

The active-site Nucleophile is the D49.

It belongs to the pseudouridine synthase TruB family. Type 1 subfamily.

The enzyme catalyses uridine(55) in tRNA = pseudouridine(55) in tRNA. In terms of biological role, responsible for synthesis of pseudouridine from uracil-55 in the psi GC loop of transfer RNAs. This chain is tRNA pseudouridine synthase B, found in Nitrosococcus oceani (strain ATCC 19707 / BCRC 17464 / JCM 30415 / NCIMB 11848 / C-107).